Reading from the N-terminus, the 149-residue chain is uncharacterized protein (149 aa).

The next 3 helical transmembrane spans lie at 39 to 61, 82 to 104, and 119 to 141; these read VPLG…LIIG, VFGY…GAIL, and WMMM…SIYL.

The protein to M.pneumoniae MPN_090.

It localises to the cell membrane. This is an uncharacterized protein from Mycoplasma pneumoniae (strain ATCC 29342 / M129 / Subtype 1) (Mycoplasmoides pneumoniae).